A 732-amino-acid chain; its full sequence is Polyribonucleotide nucleotidyltransferase (732 aa).

Asp516 and Asp522 together coordinate Mg(2+). The KH domain maps to Pro582–Ile642. One can recognise an S1 motif domain in the interval Gly659–Arg726.

The protein belongs to the polyribonucleotide nucleotidyltransferase family. The cofactor is Mg(2+).

Its subcellular location is the cytoplasm. The catalysed reaction is RNA(n+1) + phosphate = RNA(n) + a ribonucleoside 5'-diphosphate. Involved in mRNA degradation. Catalyzes the phosphorolysis of single-stranded polyribonucleotides processively in the 3'- to 5'-direction. In Nitratiruptor sp. (strain SB155-2), this protein is Polyribonucleotide nucleotidyltransferase.